The chain runs to 483 residues: UDP-N-acetylmuramoyl-L-alanyl-D-glutamate--2,6-diaminopimelate ligase (483 aa).

Residue serine 30 coordinates UDP-N-acetyl-alpha-D-muramoyl-L-alanyl-D-glutamate. ATP is bound at residue 109–115 (GTNGKTT). UDP-N-acetyl-alpha-D-muramoyl-L-alanyl-D-glutamate contacts are provided by residues 151 to 152 (TT), serine 178, and arginine 186. Lysine 218 is subject to N6-carboxylysine. Meso-2,6-diaminopimelate contacts are provided by residues arginine 380, 403 to 406 (DNPR), glycine 453, and glutamate 457. Residues 403 to 406 (DNPR) carry the Meso-diaminopimelate recognition motif motif.

It belongs to the MurCDEF family. MurE subfamily. Mg(2+) is required as a cofactor. Post-translationally, carboxylation is probably crucial for Mg(2+) binding and, consequently, for the gamma-phosphate positioning of ATP.

The protein localises to the cytoplasm. It carries out the reaction UDP-N-acetyl-alpha-D-muramoyl-L-alanyl-D-glutamate + meso-2,6-diaminopimelate + ATP = UDP-N-acetyl-alpha-D-muramoyl-L-alanyl-gamma-D-glutamyl-meso-2,6-diaminopimelate + ADP + phosphate + H(+). It functions in the pathway cell wall biogenesis; peptidoglycan biosynthesis. In terms of biological role, catalyzes the addition of meso-diaminopimelic acid to the nucleotide precursor UDP-N-acetylmuramoyl-L-alanyl-D-glutamate (UMAG) in the biosynthesis of bacterial cell-wall peptidoglycan. In Chlamydia muridarum (strain MoPn / Nigg), this protein is UDP-N-acetylmuramoyl-L-alanyl-D-glutamate--2,6-diaminopimelate ligase.